We begin with the raw amino-acid sequence, 411 residues long: Gamma-glutamyl phosphate reductase (411 aa).

It belongs to the gamma-glutamyl phosphate reductase family.

It is found in the cytoplasm. The catalysed reaction is L-glutamate 5-semialdehyde + phosphate + NADP(+) = L-glutamyl 5-phosphate + NADPH + H(+). The protein operates within amino-acid biosynthesis; L-proline biosynthesis; L-glutamate 5-semialdehyde from L-glutamate: step 2/2. Functionally, catalyzes the NADPH-dependent reduction of L-glutamate 5-phosphate into L-glutamate 5-semialdehyde and phosphate. The product spontaneously undergoes cyclization to form 1-pyrroline-5-carboxylate. This Wolinella succinogenes (strain ATCC 29543 / DSM 1740 / CCUG 13145 / JCM 31913 / LMG 7466 / NCTC 11488 / FDC 602W) (Vibrio succinogenes) protein is Gamma-glutamyl phosphate reductase.